The chain runs to 682 residues: DNA ligase (682 aa).

Residues 43–47 (DSEYD), 92–93 (SL), and D123 each bind NAD(+). K125 acts as the N6-AMP-lysine intermediate in catalysis. NAD(+)-binding residues include R146, E184, K302, and K326. Zn(2+)-binding residues include C420, C423, C438, and C443. The BRCT domain occupies 603 to 682 (TTKGFFTGKK…TFLQKLLIVL (80 aa)).

Belongs to the NAD-dependent DNA ligase family. LigA subfamily. Mg(2+) is required as a cofactor. Mn(2+) serves as cofactor.

The enzyme catalyses NAD(+) + (deoxyribonucleotide)n-3'-hydroxyl + 5'-phospho-(deoxyribonucleotide)m = (deoxyribonucleotide)n+m + AMP + beta-nicotinamide D-nucleotide.. In terms of biological role, DNA ligase that catalyzes the formation of phosphodiester linkages between 5'-phosphoryl and 3'-hydroxyl groups in double-stranded DNA using NAD as a coenzyme and as the energy source for the reaction. It is essential for DNA replication and repair of damaged DNA. This chain is DNA ligase, found in Lawsonia intracellularis (strain PHE/MN1-00).